A 191-amino-acid chain; its full sequence is MSKPITFVTGNAKKLEELVAILGPSFPRTIVSKKIDLPELQGDIDEIAIKKCKEAARQVNGPVLVEDTSLCFNALEGLPGPYIKWFLEKLQPEGLHRLLHGWENKSAQAICTFGYCDGVDAEPLIFKGITEGVIVEPRGPRDFGWDPVFQPSGYDKTYAELPKSEKNTISHRYRALALLRQHFEKQDKLIN.

Thr9–Lys14 contacts ITP. Position 39 (Glu39) interacts with Mg(2+). ITP is bound by residues Lys51, Asp67–Thr68, Lys84, Phe143–Asp146, Lys166, and His171–Arg172.

This sequence belongs to the HAM1 NTPase family. As to quaternary structure, homodimer. Requires Mg(2+) as cofactor. Mn(2+) serves as cofactor.

Its subcellular location is the cytoplasm. It catalyses the reaction ITP + H2O = IMP + diphosphate + H(+). It carries out the reaction dITP + H2O = dIMP + diphosphate + H(+). The enzyme catalyses XTP + H2O = XMP + diphosphate + H(+). Functionally, pyrophosphatase that hydrolyzes non-canonical purine nucleotides such as inosine triphosphate (ITP), deoxyinosine triphosphate (dITP) or xanthosine 5'-triphosphate (XTP) to their respective monophosphate derivatives. The enzyme does not distinguish between the deoxy- and ribose forms. Probably excludes non-canonical purines from RNA and DNA precursor pools, thus preventing their incorporation into RNA and DNA and avoiding chromosomal lesions. The chain is Inosine triphosphate pyrophosphatase from Drosophila melanogaster (Fruit fly).